A 533-amino-acid chain; its full sequence is CTP synthase (533 aa).

Residues 1-265 (MTKFIFVTGG…ARYLVRRLGL (265 aa)) form an amidoligase domain region. Ser13 lines the CTP pocket. UTP is bound at residue Ser13. An ATP-binding site is contributed by 14–19 (GLGKGI). Tyr54 is a binding site for L-glutamine. ATP is bound at residue Asp71. The Mg(2+) site is built by Asp71 and Glu139. Residues 146 to 148 (DIE), 186 to 191 (KTKPTQ), and Lys222 each bind CTP. UTP contacts are provided by residues 186 to 191 (KTKPTQ) and Lys222. In terms of domain architecture, Glutamine amidotransferase type-1 spans 290 to 532 (EIAIVGKYVK…VRAARERKYG (243 aa)). Gly351 provides a ligand contact to L-glutamine. The active-site Nucleophile; for glutamine hydrolysis is the Cys378. L-glutamine contacts are provided by residues 379-382 (FGFQ), Glu402, and Arg459. Catalysis depends on residues His505 and Glu507.

It belongs to the CTP synthase family. As to quaternary structure, homotetramer.

It carries out the reaction UTP + L-glutamine + ATP + H2O = CTP + L-glutamate + ADP + phosphate + 2 H(+). It catalyses the reaction L-glutamine + H2O = L-glutamate + NH4(+). The enzyme catalyses UTP + NH4(+) + ATP = CTP + ADP + phosphate + 2 H(+). Its pathway is pyrimidine metabolism; CTP biosynthesis via de novo pathway; CTP from UDP: step 2/2. Allosterically activated by GTP, when glutamine is the substrate; GTP has no effect on the reaction when ammonia is the substrate. The allosteric effector GTP functions by stabilizing the protein conformation that binds the tetrahedral intermediate(s) formed during glutamine hydrolysis. Inhibited by the product CTP, via allosteric rather than competitive inhibition. In terms of biological role, catalyzes the ATP-dependent amination of UTP to CTP with either L-glutamine or ammonia as the source of nitrogen. Regulates intracellular CTP levels through interactions with the four ribonucleotide triphosphates. This Thermococcus gammatolerans (strain DSM 15229 / JCM 11827 / EJ3) protein is CTP synthase.